Consider the following 268-residue polypeptide: Nitrite transporter NirC (268 aa).

At 1–25 (MFTDTINKCAANAARIARLSANNPL) the chain is on the cytoplasmic side. Residues 26–46 (GFWVSSAMAGAYVGLGIILIF) form a helical membrane-spanning segment. Residues 47 to 59 (TLGNLLDPSVRPL) lie on the Periplasmic side of the membrane. Residues 60 to 80 (VMGATFGIALTLVIIAGSELF) traverse the membrane as a helical segment. Residues 81–112 (TGHTMFLTFGVKAGSISHGQMWAILPQTWLGN) lie on the Cytoplasmic side of the membrane. Residues 113 to 133 (LVGSVFVAMLYSWGGGSLLPV) form a helical membrane-spanning segment. At 134 to 151 (DTSIVHSVALAKTTAPAM) the chain is on the periplasmic side. Residues 152–172 (VLFFKGALCNWLVCLAIWMAL) traverse the membrane as a helical segment. Over 173-179 (RTEGAAK) the chain is Cytoplasmic. The helical transmembrane segment at 180 to 200 (FIAIWWCLLAFIASGYEHSIA) threads the bilayer. The Periplasmic portion of the chain corresponds to 201–225 (NMTLFALSWFGNHSEAYTLAGIGHN). The helical transmembrane segment at 226–246 (LLWVTLGNTLSGAVFMGLGYW) threads the bilayer. The Cytoplasmic segment spans residues 247 to 268 (YATPKANRPVADKFNQTETAAG).

Belongs to the FNT transporter (TC 1.A.16) family.

The protein localises to the cell inner membrane. In terms of biological role, catalyzes nitrite uptake and nitrite export across the cytoplasmic membrane. Is up to 10-fold more active than NarK or NarU in nitrite uptake for subsequent reduction in the cytoplasm by the NirB/NirD nitrite reductase. The protein is Nitrite transporter NirC (nirC) of Escherichia coli (strain K12).